The following is a 122-amino-acid chain: Phospholipase A2 homolog ECS_00014 (122 aa).

Intrachain disulfides connect cysteine 26/cysteine 115, cysteine 28/cysteine 44, cysteine 43/cysteine 95, cysteine 49/cysteine 122, cysteine 50/cysteine 88, cysteine 57/cysteine 81, and cysteine 75/cysteine 86. The segment at 105 to 117 (KKYTYYPNFWCKG) is important for membrane-damaging activities in eukaryotes and bacteria; heparin-binding.

The protein belongs to the phospholipase A2 family. Group II subfamily. S49 sub-subfamily. In terms of assembly, monomer. As to expression, expressed by the venom gland.

The protein resides in the secreted. Snake venom phospholipase A2 homolog that lacks enzymatic activity. Shows high myotoxin activities and displays edema-inducing activities. Has cytotoxic activities against HUVEC cells (LC(50)=12.2 uL) and human lung adenocarcinoma A549 cells (LC(50)=8.5 uL). The protein is Phospholipase A2 homolog ECS_00014 of Echis carinatus sochureki (Saw-scaled viper).